Here is a 314-residue protein sequence, read N- to C-terminus: Homoserine kinase (314 aa).

Residue 95-105 (PHSRGLGSSAA) participates in ATP binding.

It belongs to the GHMP kinase family. Homoserine kinase subfamily.

The protein resides in the cytoplasm. It carries out the reaction L-homoserine + ATP = O-phospho-L-homoserine + ADP + H(+). It participates in amino-acid biosynthesis; L-threonine biosynthesis; L-threonine from L-aspartate: step 4/5. Catalyzes the ATP-dependent phosphorylation of L-homoserine to L-homoserine phosphate. This is Homoserine kinase from Mycobacterium sp. (strain KMS).